The primary structure comprises 238 residues: Probable transcriptional regulatory protein Mmwyl1_2868 (238 aa).

It belongs to the TACO1 family.

It is found in the cytoplasm. The protein is Probable transcriptional regulatory protein Mmwyl1_2868 of Marinomonas sp. (strain MWYL1).